The following is a 161-amino-acid chain: Phosphopantetheine adenylyltransferase (161 aa).

It belongs to the eukaryotic CoaD family.

It localises to the cytoplasm. The enzyme catalyses (R)-4'-phosphopantetheine + ATP + H(+) = 3'-dephospho-CoA + diphosphate. It participates in cofactor biosynthesis; coenzyme A biosynthesis. Reversibly transfers an adenylyl group from ATP to 4'-phosphopantetheine, yielding dephospho-CoA (dPCoA) and pyrophosphate. This Methanosarcina barkeri (strain Fusaro / DSM 804) protein is Phosphopantetheine adenylyltransferase.